The primary structure comprises 340 residues: Phosphoribosylformylglycinamidine cyclo-ligase (340 aa).

The protein belongs to the AIR synthase family.

It is found in the cytoplasm. It catalyses the reaction 2-formamido-N(1)-(5-O-phospho-beta-D-ribosyl)acetamidine + ATP = 5-amino-1-(5-phospho-beta-D-ribosyl)imidazole + ADP + phosphate + H(+). It participates in purine metabolism; IMP biosynthesis via de novo pathway; 5-amino-1-(5-phospho-D-ribosyl)imidazole from N(2)-formyl-N(1)-(5-phospho-D-ribosyl)glycinamide: step 2/2. The sequence is that of Phosphoribosylformylglycinamidine cyclo-ligase from Streptococcus pneumoniae (strain P1031).